Reading from the N-terminus, the 233-residue chain is Pirin-like protein YhaK (233 aa).

Belongs to the pirin family. Monomer.

It is found in the cytoplasm. In terms of biological role, does not have quercetin 2,3-dioxygenase activity. The protein is Pirin-like protein YhaK (yhaK) of Escherichia coli (strain K12).